Consider the following 506-residue polypeptide: PHD finger protein 10 (506 aa).

Disordered stretches follow at residues 1-66 (MAAV…QDFG) and 293-377 (DPEL…SVSG). The segment covering 23 to 35 (VKEDNSNDTKDPE) has biased composition (basic and acidic residues). Polar residues predominate over residues 52 to 66 (GDSTPSCENSNQDFG). The tract at residues 90–299 (MLQEQVSEYL…DPLDPELLAL (210 aa)) is SAY. Residues 326–338 (SIDSSSMNMSESD) show a composition bias toward low complexity. Residues 353-367 (KVKEKSSTPRKEGSK) show a composition bias toward basic and acidic residues. The PHD-type 1; degenerate zinc finger occupies 387-444 (ICGICLKGKDANKKGRSERLIHCSQCDNSGHPSCLDMSAELVAVIKKYPWQCMECKTC). Residues 446–489 (ICGQPHHEEEMMFCDTCDRGYHTFCVGLGALPSGRWICDCCQKV) form a PHD-type 2; degenerate zinc finger.

The protein belongs to the SAYP family. As to quaternary structure, component of neural progenitors-specific chromatin remodeling complex (npBAF complex), a subfamily of ATP-dependent SWI/SNF chromatin remodeling complexes.

It is found in the nucleus. Its function is as follows. Involved in transcription activity regulation by chromatin remodeling in the context of the neural progenitors-specific chromatin remodeling complex (npBAF complex). May play a role in the proliferation of neural progenitors. The polypeptide is PHD finger protein 10 (phf10) (Xenopus laevis (African clawed frog)).